The sequence spans 1484 residues: Chromatin remodeling regulator CECR2 (1484 aa).

The tract at residues 170–241 (VQGKSNGELS…RHGSQGPGQG (72 aa)) is disordered. A compositionally biased stretch (basic residues) spans 197–209 (TGKRRGRPPKRKK). Basic and acidic residues predominate over residues 210 to 222 (LQEEILLSEKQEE). The segment covering 223 to 234 (NSLASEPQTRHG) has biased composition (polar residues). The residue at position 422 (serine 422) is a Phosphoserine. One can recognise a Bromo domain in the interval 434–538 (FELDDDFTAM…RCFHRAMMKH (105 aa)). Position 546 is a phosphothreonine (threonine 546). Disordered regions lie at residues 556–704 (EKRE…GPRL), 796–825 (GNHGATNQGPLGPDEKPHLGPGPSHQPRTL), 919–1053 (GVPY…SYPG), 1165–1259 (VMGG…LFSD), 1287–1320 (AKVPNDGQNPGPEEEKLDESMERPESPKEFLDLD), and 1442–1484 (YRPS…LDQS). The residue at position 571 (serine 571) is a Phosphoserine. Over residues 605-614 (SSGDDQSSSS) the composition is skewed to low complexity. Serine 1014 bears the Phosphoserine mark. An asymmetric dimethylarginine mark is found at arginine 1197 and arginine 1203. Residues 1243 to 1254 (SGPPASQPPPPR) show a composition bias toward pro residues. Positions 1304 to 1320 (DESMERPESPKEFLDLD) are enriched in basic and acidic residues. Serine 1312 carries the post-translational modification Phosphoserine. Residues 1451 to 1469 (PVQSQASFPKTPTAATSQE) are compositionally biased toward polar residues. The span at 1474-1484 (HKPPTLPLDQS) shows a compositional bias: pro residues.

As to quaternary structure, component of the CERF-1 ISWI chromatin remodeling complex (also called the CECR2-containing remodeling factor (CERF) complex) at least composed of CECR2 and SMARCA1. Component of the CERF-5 ISWI chromatin remodeling complex at least composed of SMARCA5/SNF2H and CECR2. LUZP1 is detected as part of the CERF-1 and CERF-5 complexes in embryonic stem (ES) cells where it is involved in complex stabilization but is not detected in the complexes in the testis. Interacts with CCAR2; CCAR2 may form part of the CERF-1 and/or CEF-5 ISWI chromatin remodeling complexes in ES cells. Interacts with acetylated lysine residues on histone H2A and H3 (in vitro). Interacts with LRPPRC. Highly expressed in skeletal muscle, thymus, placenta and lung. Expressed at lower level in brain, heart, colon, spleen, kidney.

Its subcellular location is the nucleus. Regulatory subunit of the ATP-dependent CERF-1 and CERF-5 ISWI chromatin remodeling complexes, which form ordered nucleosome arrays on chromatin and facilitate access to DNA during DNA-templated processes such as DNA replication, transcription, and repair. The complexes do not have the ability to slide mononucleosomes to the center of a DNA template. The CERF-1 ISWI chromatin remodeling complex has a lower ATP hydrolysis rate than the CERF-5 ISWI chromatin remodeling complex. Plays a role in various processes during development: required during embryogenesis for neural tube closure and inner ear development. In adults, required for spermatogenesis, via the formation of ISWI-type chromatin complexes. In histone-modifying complexes, CECR2 recognizes and binds acylated histones: binds histones that are acetylated and/or butyrylated. May also be involved through its interaction with LRPPRC in the integration of cytoskeletal network with vesicular trafficking, nucleocytosolic shuttling, transcription, chromosome remodeling and cytokinesis. This is Chromatin remodeling regulator CECR2 (CECR2) from Homo sapiens (Human).